Consider the following 508-residue polypeptide: Photosystem II CP47 reaction center protein (508 aa).

Helical transmembrane passes span 21–36 (SVHIMHTALVSGWAGS), 101–115 (IVFSGLCFLAAIWHW), 140–156 (GIHLFLAGVACFGFGAF), 203–218 (IAAGTLGILAGLFHLS), 237–252 (VLSSSIAAVFFAAFVV), and 457–472 (TFALLFFFGHIWHGAR).

Belongs to the PsbB/PsbC family. PsbB subfamily. In terms of assembly, PSII is composed of 1 copy each of membrane proteins PsbA, PsbB, PsbC, PsbD, PsbE, PsbF, PsbH, PsbI, PsbJ, PsbK, PsbL, PsbM, PsbT, PsbX, PsbY, PsbZ, Psb30/Ycf12, at least 3 peripheral proteins of the oxygen-evolving complex and a large number of cofactors. It forms dimeric complexes. Requires Binds multiple chlorophylls. PSII binds additional chlorophylls, carotenoids and specific lipids. as cofactor.

Its subcellular location is the plastid. It is found in the chloroplast thylakoid membrane. Its function is as follows. One of the components of the core complex of photosystem II (PSII). It binds chlorophyll and helps catalyze the primary light-induced photochemical processes of PSII. PSII is a light-driven water:plastoquinone oxidoreductase, using light energy to abstract electrons from H(2)O, generating O(2) and a proton gradient subsequently used for ATP formation. This chain is Photosystem II CP47 reaction center protein, found in Oryza nivara (Indian wild rice).